Here is a 346-residue protein sequence, read N- to C-terminus: Syntaxin UFE1 (346 aa).

At 1 to 324 (MMSDLTPIFR…RKAKRAAGRT (324 aa)) the chain is on the cytoplasmic side. One can recognise a t-SNARE coiled-coil homology domain in the interval 255–317 (LNQKNEQLKK…KKGNKELRKA (63 aa)). The chain crosses the membrane as a helical; Anchor for type IV membrane protein span at residues 325-342 (AKMTTYGAIIMGVFILFL). At 343-346 (DYVG) the chain is on the lumenal side.

It belongs to the syntaxin family. As to quaternary structure, component of a SNARE complex consisting of UFE1, USE1, SEC20 and SEC22 or YKT6.

The protein resides in the endoplasmic reticulum membrane. Its function is as follows. Syntaxin required for targeting and fusion of Golgi-derived retrograde transport vesicles with the ER. This is Syntaxin UFE1 (UFE1) from Saccharomyces cerevisiae (strain ATCC 204508 / S288c) (Baker's yeast).